Here is a 277-residue protein sequence, read N- to C-terminus: Large ribosomal subunit protein uL2 (277 aa).

Disordered regions lie at residues 37-60 (KNSTAGRNSNGHITTRHKGGGHKH) and 223-265 (VVMN…KRTD). Residues 39 to 49 (STAGRNSNGHI) show a composition bias toward polar residues. Over residues 50–60 (TTRHKGGGHKH) the composition is skewed to basic residues. Basic and acidic residues predominate over residues 229-244 (DHPHGGGEGRTGEARE).

Belongs to the universal ribosomal protein uL2 family. In terms of assembly, part of the 50S ribosomal subunit. Forms a bridge to the 30S subunit in the 70S ribosome.

Functionally, one of the primary rRNA binding proteins. Required for association of the 30S and 50S subunits to form the 70S ribosome, for tRNA binding and peptide bond formation. It has been suggested to have peptidyltransferase activity; this is somewhat controversial. Makes several contacts with the 16S rRNA in the 70S ribosome. This chain is Large ribosomal subunit protein uL2, found in Neisseria meningitidis serogroup C (strain 053442).